A 400-amino-acid chain; its full sequence is Argininosuccinate synthase (400 aa).

Ala-9–Ser-17 provides a ligand contact to ATP. An L-citrulline-binding site is contributed by Tyr-87. Residue Gly-117 participates in ATP binding. 3 residues coordinate L-aspartate: Thr-119, Asn-123, and Asp-124. Residue Asn-123 coordinates L-citrulline. L-citrulline contacts are provided by Arg-127, Ser-176, Ser-185, Glu-261, and Tyr-273.

The protein belongs to the argininosuccinate synthase family. Type 1 subfamily. As to quaternary structure, homotetramer.

It is found in the cytoplasm. The enzyme catalyses L-citrulline + L-aspartate + ATP = 2-(N(omega)-L-arginino)succinate + AMP + diphosphate + H(+). It functions in the pathway amino-acid biosynthesis; L-arginine biosynthesis; L-arginine from L-ornithine and carbamoyl phosphate: step 2/3. In Pelodictyon phaeoclathratiforme (strain DSM 5477 / BU-1), this protein is Argininosuccinate synthase.